We begin with the raw amino-acid sequence, 427 residues long: MTNFILNENKQLSLAIEDENIENFYIDGTDLVRKIIRRSGSGVTSRVPVLSTQDLENKNLHELYDESWLRMKNRPNTELTTESINIADLFSGCGGLSLGVWEACRALGINPRFSFACDLNEAALSVYEKNFSPDFSLNESIEKHINGELGAPLTVEEQRIKDKVKKIDFILAGPPCQGHSDLNNHTRRKDPRNALLMRVSRVIELFQPSSVLVENVPGIIHDKSGSFKEFKNHLKTQGYYFDEIVLNAEKLGVSQARRRYFIFASKTPVSSLNQINEFYSTNSRPISWAISDLVENVGDDIFNTASEHSLENKRRIEYLFENNLFELPNSERPDCHRLKPHSYKSVYGRMYWDRPAPTITRGFGSTGQGRFVHSLLKRTITPHEAARIQFFPDFFNFGDLRRRQYQDVIGNAVPSKLSYLLALHQLR.

The SAM-dependent MTase C5-type domain maps to 84 to 427; it reads INIADLFSGC…SYLLALHQLR (344 aa). Cysteine 176 is an active-site residue.

The protein belongs to the class I-like SAM-binding methyltransferase superfamily. C5-methyltransferase family. As to quaternary structure, monomer. May form a complex with YdiP, also seems to be active alone.

The enzyme catalyses a 2'-deoxycytidine in DNA + S-adenosyl-L-methionine = a 5-methyl-2'-deoxycytidine in DNA + S-adenosyl-L-homocysteine + H(+). Its activity is regulated as follows. Somewhat inhibited by MgCl(2) and spermidine, strongly inhibited by MnCl(2). Functionally, a methylase, recognizes the double-stranded sequence 5'-YTCGAR-3', methylates C-3 on both strands, and protects the DNA from cleavage by the BsuMI endonuclease. The polypeptide is Type II methyltransferase M1.BsuMI (ydiO) (Bacillus subtilis (strain 168)).